The sequence spans 274 residues: Mitochondrial S-adenosylmethionine carrier protein (274 aa).

Solcar repeat units follow at residues proline 4–leucine 77, phenylalanine 86–leucine 168, and valine 177–leucine 265. A run of 6 helical transmembrane segments spans residues glycine 5–phenylalanine 25, isoleucine 49–leucine 69, histidine 85–isoleucine 105, arginine 142–tryptophan 162, serine 182–valine 202, and phenylalanine 238–alanine 258.

The protein belongs to the mitochondrial carrier (TC 2.A.29) family.

The protein resides in the mitochondrion inner membrane. It carries out the reaction S-adenosyl-L-homocysteine(out) + S-adenosyl-L-methionine(in) = S-adenosyl-L-homocysteine(in) + S-adenosyl-L-methionine(out). Mitochondrial S-adenosyl-L-methionine/S-adenosyl-L-homocysteine antiporter. Mediates the exchange of cytosolic S-adenosyl-L-methionine, the predominant methyl-group donor for macromolecule methylation processes, for mitochondrial S-adenosylhomocysteine(SAH), a by-product of methylation reactions. The polypeptide is Mitochondrial S-adenosylmethionine carrier protein (Mus musculus (Mouse)).